Reading from the N-terminus, the 171-residue chain is ATP synthase subunit b (171 aa).

The chain crosses the membrane as a helical span at residues 2 to 22 (FLVKMVLGFLIFLSPLCATGL).

It belongs to the ATPase B chain family. F-type ATPases have 2 components, F(1) - the catalytic core - and F(0) - the membrane proton channel. F(1) has five subunits: alpha(3), beta(3), gamma(1), delta(1), epsilon(1). F(0) has three main subunits: a(1), b(2) and c(10-14). The alpha and beta chains form an alternating ring which encloses part of the gamma chain. F(1) is attached to F(0) by a central stalk formed by the gamma and epsilon chains, while a peripheral stalk is formed by the delta and b chains.

It is found in the cell inner membrane. Functionally, f(1)F(0) ATP synthase produces ATP from ADP in the presence of a proton or sodium gradient. F-type ATPases consist of two structural domains, F(1) containing the extramembraneous catalytic core and F(0) containing the membrane proton channel, linked together by a central stalk and a peripheral stalk. During catalysis, ATP synthesis in the catalytic domain of F(1) is coupled via a rotary mechanism of the central stalk subunits to proton translocation. Component of the F(0) channel, it forms part of the peripheral stalk, linking F(1) to F(0). This Helicobacter pylori (strain Shi470) protein is ATP synthase subunit b.